The primary structure comprises 269 residues: Nitrite transporter NirC (269 aa).

Residues 1–29 lie on the Cytoplasmic side of the membrane; sequence MFTDTINKCAANAARIARLSANNPLGFWV. Residues 30 to 46 traverse the membrane as a helical segment; it reads SSAMAGAYVGLGIILIF. At 47–58 the chain is on the extracellular side; it reads TLGNLLDPSVRP. The helical transmembrane segment at 59 to 75 threads the bilayer; that stretch reads LVMGATFGIALTLVIIA. The Cytoplasmic portion of the chain corresponds to 76 to 107; sequence GSELFTGHTMFLTLGVKAGTISHGQMWAILPQ. A helical membrane pass occupies residues 108–125; it reads TWLGNLVGSVFVALLYSW. At 126–153 the chain is on the extracellular side; the sequence is GGGSLLPVDTSIVHSVALAKTTAPATVL. The chain crosses the membrane as a helical span at residues 154 to 172; that stretch reads FFKGALCNWLVCLAIWMAI. Residues 173 to 179 are Cytoplasmic-facing; sequence RTEGTAK. The helical transmembrane segment at 180-195 threads the bilayer; sequence FLAIWWCLLAFIASGY. The Extracellular portion of the chain corresponds to 196-230; it reads EHSVANMTLFALSWFGHHSDAYTLAGIGHNLLWVT. Residues 231 to 250 traverse the membrane as a helical segment; that stretch reads LGNTLSGVVFMGLGYWYATP. The Cytoplasmic segment spans residues 251–269; it reads KSERPAPAKINQPEAAANN.

The protein belongs to the FNT transporter (TC 1.A.16) family.

The protein resides in the cell inner membrane. Its function is as follows. Catalyzes nitrite uptake and nitrite export across the cytoplasmic membrane. The chain is Nitrite transporter NirC (nirC) from Salmonella typhimurium (strain LT2 / SGSC1412 / ATCC 700720).